A 532-amino-acid chain; its full sequence is Probable alpha-galactosidase A (532 aa).

A signal peptide spans 1–21; the sequence is MDTTKSLLSTLIAIMIPLSLG. A disulfide bridge connects residues Cys-44 and Cys-76. N-linked (GlcNAc...) asparagine glycans are attached at residues Asn-47, Asn-91, and Asn-121. A disulfide bond links Cys-124 and Cys-154. The Nucleophile role is filled by Asp-152. The N-linked (GlcNAc...) asparagine glycan is linked to Asn-201. The active-site Proton donor is the Asp-210. Residues 410 to 531 form the Ricin B-type lectin domain; the sequence is CSTVIPTGIV…GLPSGVDIKP (122 aa). 2 disulfides stabilise this stretch: Cys-427-Cys-441 and Cys-466-Cys-478.

It belongs to the glycosyl hydrolase 27 family.

The protein resides in the secreted. It carries out the reaction Hydrolysis of terminal, non-reducing alpha-D-galactose residues in alpha-D-galactosides, including galactose oligosaccharides, galactomannans and galactolipids.. Functionally, hydrolyzes a variety of simple alpha-D-galactoside as well as more complex molecules such as oligosaccharides and polysaccharides. The chain is Probable alpha-galactosidase A (aglA) from Aspergillus fumigatus (strain ATCC MYA-4609 / CBS 101355 / FGSC A1100 / Af293) (Neosartorya fumigata).